The sequence spans 126 residues: Integrin alpha-M (126 aa).

Residues Asn25, Asn78, and Asn106 are each glycosylated (N-linked (GlcNAc...) asparagine).

The protein belongs to the integrin alpha chain family. In terms of assembly, heterodimer of an alpha and a beta chain. ITGAM associates with ITGB2. Found in a complex with CD177 and ITGB2/CD18. Interacts with JAM3. Interacts with THBD. Interacts with TMEM268; this interaction inhibits ITGAM degradation via the endosome-lysosome pathway.

It localises to the cell membrane. Its subcellular location is the membrane raft. Integrin ITGAM/ITGB2 is implicated in various adhesive interactions of monocytes, macrophages and granulocytes as well as in mediating the uptake of complement-coated particles. It is identical with CR-3, the receptor for the iC3b fragment of the third complement component. It probably recognizes the R-G-D peptide in C3b. Integrin ITGAM/ITGB2 is also a receptor for fibrinogen, factor X and ICAM1. It recognizes P1 and P2 peptides of fibrinogen gamma chain. Regulates neutrophil migration. In association with beta subunit ITGB2/CD18, required for CD177-PRTN3-mediated activation of TNF primed neutrophils. May regulate phagocytosis-induced apoptosis in extravasated neutrophils. May play a role in mast cell development. Required with TYROBP/DAP12 in microglia to control production of microglial superoxide ions which promote the neuronal apoptosis that occurs during brain development. The protein is Integrin alpha-M (ITGAM) of Cavia porcellus (Guinea pig).